The following is a 510-amino-acid chain: Probable inorganic carbon transporter subunit DabB (510 aa).

14 helical membrane-spanning segments follow: residues 9-29 (TLLTLFFIALSASWLSGLLFL), 37-57 (FVHIHIGIAALPSLVSLLALV), 68-88 (WHLDTLAWLMAFFVLTIGLII), 105-122 (YFALFTFTTGVSSVAWLS), 125-145 (LRFMIMCWGATLIGLVLLIGL), 158-178 (ISGYLFTISWIALLSAIIWLF), 204-224 (TGINLLIIVAVMIPAAQWPFQ), 226-246 (WLIESAVAPTPVSAIMHAGLV), 266-286 (QIILLIFSSISVLIGTGISLV), 303-323 (GFMLIQCALGAYLAAVIHLIL), 355-375 (LWMIVGRVLGLFIAIAFWFIT), 382-402 (LVSALILGWSLYFSWKQLVVF), 410-430 (IAGLIVLIGFSLIYFTVHNSL), and 446-466 (APAVIFVICILLFSSVICTFV).

Belongs to the inorganic carbon transporter (TC 9.A.2) DabB family. Forms a complex with DabA.

The protein resides in the cell membrane. Part of an energy-coupled inorganic carbon pump. Expression of both dabA and dabB (DA2) restores growth in ambient air to E.coli deleted of its carbonic anhydrase genes (called CAfree, deletion of 'can' and 'cynT'). The chain is Probable inorganic carbon transporter subunit DabB from Bacillus anthracis.